The sequence spans 635 residues: Sodium- and chloride-dependent creatine transporter 1 (635 aa).

Positions Met1–Asp35 are disordered. Residues Met1–Asp60 lie on the Cytoplasmic side of the membrane. Over residues Pro25 to Asp35 the composition is skewed to low complexity. Residues Phe61–Leu81 form a helical membrane-spanning segment. Over Cys82–Gly87 the chain is Extracellular. A helical membrane pass occupies residues Gly88–Leu108. The Cytoplasmic segment spans residues Glu109 to Met138. Residues Val139–Leu159 traverse the membrane as a helical segment. Residues Val160–Ala230 are Extracellular-facing. N-linked (GlcNAc...) asparagine glycosylation is found at Asn192 and Asn197. The helical transmembrane segment at Leu231–Trp251 threads the bilayer. Topologically, residues Lys252–Tyr269 are cytoplasmic. Residues Val270–Ile290 form a helical membrane-spanning segment. At Tyr291–Gln304 the chain is on the extracellular side. A helical membrane pass occupies residues Val305–Thr325. Residues Ala326–Ala341 are Cytoplasmic-facing. The helical transmembrane segment at Ile342–Ile362 threads the bilayer. Over Leu363–Thr394 the chain is Extracellular. Residues Leu395–Leu415 form a helical membrane-spanning segment. The Cytoplasmic portion of the chain corresponds to Asp416–Glu444. Residues Ile445–Ala465 form a helical membrane-spanning segment. Residues Gly466 to Ser479 are Extracellular-facing. Residues Gly480–Ala500 traverse the membrane as a helical segment. Residues Asp501 to Lys520 are Cytoplasmic-facing. The chain crosses the membrane as a helical span at residues Trp521–Tyr541. Residues Tyr542–Met560 are Extracellular-facing. An N-linked (GlcNAc...) asparagine glycan is attached at Asn548. The chain crosses the membrane as a helical span at residues Gly561–Leu581. The Cytoplasmic segment spans residues Arg582 to Met635. 2 positions are modified to phosphothreonine: Thr617 and Thr620. At Ser623 the chain carries Phosphoserine.

This sequence belongs to the sodium:neurotransmitter symporter (SNF) (TC 2.A.22) family. SLC6A8 subfamily. Glycosylated. As to expression, prominent in kidney, heart, and muscle, also present in brain, but not in liver and intestine.

It is found in the cell membrane. Its subcellular location is the apical cell membrane. It catalyses the reaction creatine(out) + chloride(out) + 2 Na(+)(out) = creatine(in) + chloride(in) + 2 Na(+)(in). Functionally, creatine:sodium symporter which mediates the uptake of creatine. Plays an important role in supplying creatine to the brain via the blood-brain barrier. The sequence is that of Sodium- and chloride-dependent creatine transporter 1 (SLC6A8) from Oryctolagus cuniculus (Rabbit).